A 145-amino-acid chain; its full sequence is D-aminoacyl-tRNA deacylase (145 aa).

The Gly-cisPro motif, important for rejection of L-amino acids signature appears at 137–138 (GP).

The protein belongs to the DTD family. In terms of assembly, homodimer.

It is found in the cytoplasm. It carries out the reaction glycyl-tRNA(Ala) + H2O = tRNA(Ala) + glycine + H(+). The catalysed reaction is a D-aminoacyl-tRNA + H2O = a tRNA + a D-alpha-amino acid + H(+). An aminoacyl-tRNA editing enzyme that deacylates mischarged D-aminoacyl-tRNAs. Also deacylates mischarged glycyl-tRNA(Ala), protecting cells against glycine mischarging by AlaRS. Acts via tRNA-based rather than protein-based catalysis; rejects L-amino acids rather than detecting D-amino acids in the active site. By recycling D-aminoacyl-tRNA to D-amino acids and free tRNA molecules, this enzyme counteracts the toxicity associated with the formation of D-aminoacyl-tRNA entities in vivo and helps enforce protein L-homochirality. In Dinoroseobacter shibae (strain DSM 16493 / NCIMB 14021 / DFL 12), this protein is D-aminoacyl-tRNA deacylase.